Reading from the N-terminus, the 389-residue chain is Putative teichuronic acid biosynthesis glycosyltransferase TuaC (389 aa).

This sequence belongs to the glycosyltransferase group 1 family. Glycosyltransferase 4 subfamily.

Its pathway is cell wall biogenesis; teichuronic acid biosynthesis. This Bacillus subtilis (strain 168) protein is Putative teichuronic acid biosynthesis glycosyltransferase TuaC (tuaC).